Reading from the N-terminus, the 225-residue chain is UPF0758 protein Ssed_0385 (225 aa).

One can recognise an MPN domain in the interval 102 to 224 (ILSDPDLTRD…IVSFAERGWI (123 aa)). Residues H173, H175, and D186 each contribute to the Zn(2+) site. The JAMM motif signature appears at 173-186 (HNHPSGVAEPSLAD).

It belongs to the UPF0758 family.

This is UPF0758 protein Ssed_0385 from Shewanella sediminis (strain HAW-EB3).